Consider the following 284-residue polypeptide: 2-dehydro-3-deoxyphosphooctonate aldolase (284 aa).

Belongs to the KdsA family.

The protein localises to the cytoplasm. The catalysed reaction is D-arabinose 5-phosphate + phosphoenolpyruvate + H2O = 3-deoxy-alpha-D-manno-2-octulosonate-8-phosphate + phosphate. It participates in carbohydrate biosynthesis; 3-deoxy-D-manno-octulosonate biosynthesis; 3-deoxy-D-manno-octulosonate from D-ribulose 5-phosphate: step 2/3. The protein operates within bacterial outer membrane biogenesis; lipopolysaccharide biosynthesis. The polypeptide is 2-dehydro-3-deoxyphosphooctonate aldolase (Paraburkholderia xenovorans (strain LB400)).